Consider the following 62-residue polypeptide: UPF0339 protein Atu5359 (62 aa).

It belongs to the UPF0339 family.

The sequence is that of UPF0339 protein Atu5359 from Agrobacterium fabrum (strain C58 / ATCC 33970) (Agrobacterium tumefaciens (strain C58)).